Here is a 1048-residue protein sequence, read N- to C-terminus: Transcription factor mef2A (1048 aa).

An MADS-box domain is found at methionine 1–aspartate 61. Residues aspartate 74–tyrosine 85 show a composition bias toward polar residues. Disordered regions lie at residues aspartate 74 to glutamine 263, glutamine 294 to glutamine 339, glycine 386 to threonine 812, and leucine 916 to asparagine 1048. The segment covering aspartate 97–glycine 110 has biased composition (acidic residues). Low complexity-rich tracts occupy residues asparagine 130 to histidine 205, glycine 212 to glutamine 263, glutamine 294 to asparagine 303, glutamine 327 to glutamine 339, proline 393 to lysine 437, tyrosine 446 to glycine 466, and glutamine 481 to proline 500. Positions asparagine 249 to methionine 304 form a coiled coil. The segment covering tyrosine 506–histidine 522 has biased composition (polar residues). Residues histidine 529–glutamine 539 show a composition bias toward basic residues. Positions glutamine 540–glutamine 593 are enriched in low complexity. Residues asparagine 600–methionine 618 show a composition bias toward polar residues. The segment covering asparagine 619–asparagine 699 has biased composition (low complexity). The span at serine 715–valine 736 shows a compositional bias: polar residues. Low complexity-rich tracts occupy residues asparagine 738–threonine 802, serine 924–serine 960, and asparagine 982–asparagine 1029.

It is found in the nucleus. Its function is as follows. Transcription factor that regulates cell differentiation during development. Seems to negatively regulate prestalk gene expression and positively regulate prespore gene expression. The sequence is that of Transcription factor mef2A (mef2A) from Dictyostelium discoideum (Social amoeba).